The chain runs to 194 residues: Peptidyl-tRNA hydrolase (194 aa).

Position 17 (tyrosine 17) interacts with tRNA. Residue histidine 22 is the Proton acceptor of the active site. Positions 68, 70, and 116 each coordinate tRNA.

This sequence belongs to the PTH family. Monomer.

It is found in the cytoplasm. It carries out the reaction an N-acyl-L-alpha-aminoacyl-tRNA + H2O = an N-acyl-L-amino acid + a tRNA + H(+). Hydrolyzes ribosome-free peptidyl-tRNAs (with 1 or more amino acids incorporated), which drop off the ribosome during protein synthesis, or as a result of ribosome stalling. Functionally, catalyzes the release of premature peptidyl moieties from peptidyl-tRNA molecules trapped in stalled 50S ribosomal subunits, and thus maintains levels of free tRNAs and 50S ribosomes. The sequence is that of Peptidyl-tRNA hydrolase from Shewanella halifaxensis (strain HAW-EB4).